The following is a 284-amino-acid chain: L-ribulose-5-phosphate 3-epimerase UlaE (284 aa).

This sequence belongs to the L-ribulose-5-phosphate 3-epimerase family.

The catalysed reaction is L-ribulose 5-phosphate = L-xylulose 5-phosphate. It participates in cofactor degradation; L-ascorbate degradation; D-xylulose 5-phosphate from L-ascorbate: step 3/4. Its function is as follows. Catalyzes the isomerization of L-xylulose-5-phosphate to L-ribulose-5-phosphate. Is involved in the anaerobic L-ascorbate utilization. The polypeptide is L-ribulose-5-phosphate 3-epimerase UlaE (Salmonella typhi).